The primary structure comprises 652 residues: DNA mismatch repair protein MutL (652 aa).

The protein belongs to the DNA mismatch repair MutL/HexB family.

Its function is as follows. This protein is involved in the repair of mismatches in DNA. It is required for dam-dependent methyl-directed DNA mismatch repair. May act as a 'molecular matchmaker', a protein that promotes the formation of a stable complex between two or more DNA-binding proteins in an ATP-dependent manner without itself being part of a final effector complex. The chain is DNA mismatch repair protein MutL from Aliivibrio salmonicida (strain LFI1238) (Vibrio salmonicida (strain LFI1238)).